The primary structure comprises 323 residues: Sphingolipid delta(4)-desaturase DES1 (323 aa).

Gly-2 is lipidated: N-myristoyl glycine. Helical transmembrane passes span 41–61 (PNLI…FYLV) and 68–88 (WLMF…TLAI). Residues 89–93 (HEISH) carry the Histidine box-1 motif. A helical membrane pass occupies residues 104-124 (WNRWFGMFANLSLGVPYSISF). A Histidine box-2 motif is present at residues 128 to 132 (HMDHH). The next 3 helical transmembrane spans lie at 152–172 (FFCT…FYAF), 184–204 (HLEV…YYVF), and 210–230 (VYML…GHFI). Residues 259-263 (HNEHH) carry the Histidine box-3 motif. The residue at position 307 (Ser-307) is a Phosphoserine.

The protein belongs to the fatty acid desaturase type 1 family. DEGS subfamily. Interacts with RLBP1; the interaction increases synthesis of chromophore-precursors by DEGS1. Myristoylation can target the enzyme to the mitochondria leading to an increase in ceramide levels.

The protein localises to the mitochondrion membrane. It is found in the endoplasmic reticulum membrane. It catalyses the reaction an N-acylsphinganine + 2 Fe(II)-[cytochrome b5] + O2 + 2 H(+) = an N-acylsphing-4-enine + 2 Fe(III)-[cytochrome b5] + 2 H2O. The enzyme catalyses all-trans-retinol = 11-cis-retinol. It carries out the reaction all-trans-retinol = 9-cis-retinol. The catalysed reaction is all-trans-retinol = 13-cis-retinol. It catalyses the reaction 11-cis-retinol = 13-cis-retinol. The enzyme catalyses 11-cis-retinol = 9-cis-retinol. Has sphingolipid-delta-4-desaturase activity. Converts D-erythro-sphinganine to D-erythro-sphingosine (E-sphing-4-enine). Catalyzes the equilibrium isomerization of retinols. In Rattus norvegicus (Rat), this protein is Sphingolipid delta(4)-desaturase DES1.